We begin with the raw amino-acid sequence, 341 residues long: Holliday junction branch migration complex subunit RuvB (341 aa).

Positions 1 to 182 are large ATPase domain (RuvB-L); sequence MKDRLISAVA…FGVISRLEYY (182 aa). ATP is bound by residues L21, R22, G63, K66, T67, T68, 129–131, R172, Y182, and R219; that span reads EDY. T67 is a binding site for Mg(2+). The interval 183–253 is small ATPAse domain (RuvB-S); it reads RPEDLVLIVN…VAVEALKFLE (71 aa). The head domain (RuvB-H) stretch occupies residues 256–341; the sequence is PLGLDFADRR…REETDQVSLW (86 aa). Residues R311 and R316 each contribute to the DNA site.

This sequence belongs to the RuvB family. As to quaternary structure, homohexamer. Forms an RuvA(8)-RuvB(12)-Holliday junction (HJ) complex. HJ DNA is sandwiched between 2 RuvA tetramers; dsDNA enters through RuvA and exits via RuvB. An RuvB hexamer assembles on each DNA strand where it exits the tetramer. Each RuvB hexamer is contacted by two RuvA subunits (via domain III) on 2 adjacent RuvB subunits; this complex drives branch migration. In the full resolvosome a probable DNA-RuvA(4)-RuvB(12)-RuvC(2) complex forms which resolves the HJ.

It localises to the cytoplasm. The catalysed reaction is ATP + H2O = ADP + phosphate + H(+). Its function is as follows. The RuvA-RuvB-RuvC complex processes Holliday junction (HJ) DNA during genetic recombination and DNA repair, while the RuvA-RuvB complex plays an important role in the rescue of blocked DNA replication forks via replication fork reversal (RFR). RuvA specifically binds to HJ cruciform DNA, conferring on it an open structure. The RuvB hexamer acts as an ATP-dependent pump, pulling dsDNA into and through the RuvAB complex. RuvB forms 2 homohexamers on either side of HJ DNA bound by 1 or 2 RuvA tetramers; 4 subunits per hexamer contact DNA at a time. Coordinated motions by a converter formed by DNA-disengaged RuvB subunits stimulates ATP hydrolysis and nucleotide exchange. Immobilization of the converter enables RuvB to convert the ATP-contained energy into a lever motion, pulling 2 nucleotides of DNA out of the RuvA tetramer per ATP hydrolyzed, thus driving DNA branch migration. The RuvB motors rotate together with the DNA substrate, which together with the progressing nucleotide cycle form the mechanistic basis for DNA recombination by continuous HJ branch migration. Branch migration allows RuvC to scan DNA until it finds its consensus sequence, where it cleaves and resolves cruciform DNA. In Pelotomaculum thermopropionicum (strain DSM 13744 / JCM 10971 / SI), this protein is Holliday junction branch migration complex subunit RuvB.